The following is a 295-amino-acid chain: Voltage-gated potassium channel (295 aa).

Topologically, residues 1–38 are cytoplasmic; sequence MSVERWVFPGCSVMARFRRGLSDLGGRVRNIGDVMEHP. Residues 39 to 63 traverse the membrane as a helical segment; sequence LVELGVSYAALLSVIVVVVEYTMQL. The Extracellular segment spans residues 64 to 67; the sequence is SGEY. Residues 68–92 traverse the membrane as a helical segment; the sequence is LVRLYLVDLILVIILWADYAYRAYK. The Cytoplasmic segment spans residues 93–96; that stretch reads SGDP. Residues 97–105 constitute an intramembrane region (helical); that stretch reads AGYVKKTLY. Residues 106-108 lie on the Extracellular side of the membrane; that stretch reads EIP. A helical; Voltage-sensor membrane pass occupies residues 109–125; sequence ALVPAGLLALIEGHLAG. Over 126–128 the chain is Cytoplasmic; that stretch reads LGL. Residues 129 to 145 form a helical; Voltage-sensor membrane-spanning segment; that stretch reads FRLVRLLRFLRILLIIS. The Cytoplasmic portion of the chain corresponds to 146–159; sequence RGSKFLSAIADAAD. A helical membrane pass occupies residues 160–184; that stretch reads KIRFYHLFGAVMLTVLYGAFAIYIV. Topologically, residues 185–195 are extracellular; the sequence is EYPDPNSSIKS. The segment at residues 196–208 is an intramembrane region (pore-forming); it reads VFDALWWAVVTAT. Positions 209 to 214 match the Selectivity filter motif; the sequence is TVGYGD. The Extracellular portion of the chain corresponds to 209–221; the sequence is TVGYGDVVPATPI. Residues 222–253 traverse the membrane as a helical segment; sequence GKVIGIAVMLTGISALTLLIGTVSNMFQKILV. Residues 254–295 are Cytoplasmic-facing; sequence GEPEPSCSPAKLAEMVSSMSEEEFEEFVRTLKNLRRLENSMK.

The protein belongs to the potassium channel family.

It localises to the cell membrane. Its function is as follows. Mediates a strong voltage-dependent potassium ion permeability of excitable membranes. Assuming opened or closed conformations in response to the voltage difference across the membrane, the protein forms a potassium-selective channel through which potassium ions may pass in accordance with their electrochemical gradient. The polypeptide is Voltage-gated potassium channel (Aeropyrum pernix (strain ATCC 700893 / DSM 11879 / JCM 9820 / NBRC 100138 / K1)).